The sequence spans 229 residues: Dihydrofolate reductase (229 aa).

One can recognise a DHFR domain in the interval 11–227; it reads SITAVVAATA…VKYIFEMWVL (217 aa). NADP(+)-binding positions include A17 and 23 to 29; that span reads GIGLNGG. Residue 37-42 coordinates substrate; that stretch reads EMKYFA. Position 64 to 66 (64 to 66) interacts with NADP(+); that stretch reads RKT. R80 is a substrate binding site. Residues 86 to 88 and 127 to 134 contribute to the NADP(+) site; these read SGK and GGATLYTS.

Belongs to the dihydrofolate reductase family. In terms of assembly, monomer.

The catalysed reaction is (6S)-5,6,7,8-tetrahydrofolate + NADP(+) = 7,8-dihydrofolate + NADPH + H(+). It functions in the pathway cofactor biosynthesis; tetrahydrofolate biosynthesis; 5,6,7,8-tetrahydrofolate from 7,8-dihydrofolate: step 1/1. Its function is as follows. Key enzyme in folate metabolism. Catalyzes an essential reaction for de novo glycine and purine synthesis, and for DNA precursor synthesis. The chain is Dihydrofolate reductase (DFR1) from Cryptococcus neoformans var. neoformans serotype D (strain JEC21 / ATCC MYA-565) (Filobasidiella neoformans).